The primary structure comprises 171 residues: Adenine phosphoribosyltransferase (171 aa).

Belongs to the purine/pyrimidine phosphoribosyltransferase family. As to quaternary structure, homodimer.

It localises to the cytoplasm. The enzyme catalyses AMP + diphosphate = 5-phospho-alpha-D-ribose 1-diphosphate + adenine. Its pathway is purine metabolism; AMP biosynthesis via salvage pathway; AMP from adenine: step 1/1. In terms of biological role, catalyzes a salvage reaction resulting in the formation of AMP, that is energically less costly than de novo synthesis. The sequence is that of Adenine phosphoribosyltransferase from Mycoplasma mobile (strain ATCC 43663 / 163K / NCTC 11711) (Mesomycoplasma mobile).